We begin with the raw amino-acid sequence, 711 residues long: Ribosomal RNA large subunit methyltransferase K/L (711 aa).

The THUMP domain maps to 43 to 154 (TLYRTLLWSR…RENLVISLDL (112 aa)).

The protein belongs to the methyltransferase superfamily. RlmKL family.

The protein resides in the cytoplasm. It catalyses the reaction guanosine(2445) in 23S rRNA + S-adenosyl-L-methionine = N(2)-methylguanosine(2445) in 23S rRNA + S-adenosyl-L-homocysteine + H(+). The catalysed reaction is guanosine(2069) in 23S rRNA + S-adenosyl-L-methionine = N(2)-methylguanosine(2069) in 23S rRNA + S-adenosyl-L-homocysteine + H(+). Its function is as follows. Specifically methylates the guanine in position 2445 (m2G2445) and the guanine in position 2069 (m7G2069) of 23S rRNA. This chain is Ribosomal RNA large subunit methyltransferase K/L, found in Haemophilus influenzae (strain ATCC 51907 / DSM 11121 / KW20 / Rd).